The following is a 779-amino-acid chain: Potassium/sodium hyperpolarization-activated cyclic nucleotide-gated channel 3 (779 aa).

The interval 1-47 (MEEEARPAAGAGEAATPARETPPAAPAQARAASGGVPESAPEPKRRQ) is disordered. Over 1 to 96 (MEEEARPAAG…PYSDFRFYWD (96 aa)) the chain is Cytoplasmic. Residues 7-32 (PAAGAGEAATPARETPPAAPAQARAA) are compositionally biased toward low complexity. Residues 45–90 (RRQLGTLLQPTVNKFSLRVFGSHKAVEIEQERVKSAGAWIIHPYSD) form an involved in subunit assembly region. A helical transmembrane segment spans residues 97–117 (LIMLLLMVGNLIVLPVGITFF). Over 118–123 (KEENSP) the chain is Extracellular. Residues 124-144 (PWIVFNVLSDTFFLLDLVLNF) traverse the membrane as a helical segment. The Cytoplasmic segment spans residues 145–170 (RTGIVVEEGAEILLAPRAIRTRYLRT). The helical transmembrane segment at 171–191 (WFLVDLISSIPVDYIFLVVEL) threads the bilayer. Over 192–200 (EPRLDAEVY) the chain is Extracellular. The helical; Voltage-sensor transmembrane segment at 201 to 221 (KTARALRIVRFTKILSLLRLL) threads the bilayer. Residues 222-252 (RLSRLIRYIHQWEEIFHMTYDLASAVVRIFN) are Cytoplasmic-facing. The helical transmembrane segment at 253–273 (LIGMMLLLCHWDGCLQFLVPM) threads the bilayer. At 274 to 296 (LQDFPSDCWVSMNRMVNHSWGRQ) the chain is on the extracellular side. N-linked (GlcNAc...) asparagine glycosylation is present at Asn290. An intramembrane region (pore-forming) is located at residues 297–318 (YSHALFKAMSHMLCIGYGQQAP). Over 319–328 (VGMPDVWLTM) the chain is Extracellular. The helical transmembrane segment at 329 to 349 (LSMIVGATCYAMFIGHATALI) threads the bilayer. The Cytoplasmic segment spans residues 350–779 (QSLDSSRRQY…PRGPQISANM (430 aa)). The interaction with KCTD3 stretch occupies residues 353-779 (DSSRRQYQEK…PRGPQISANM (427 aa)). 3',5'-cyclic AMP is bound by residues Gly491, Glu492, Cys494, Arg501, Thr502, Arg542, and Arg545. The disordered stretch occupies residues 549–569 (KNSILQRKRSEPSPGSSGGVM). Ser633 carries the post-translational modification Phosphoserine. Polar residues predominate over residues 687–697 (SLSRTGRSQVS). Residues 687-779 (SLSRTGRSQV…PRGPQISANM (93 aa)) form a disordered region.

This sequence belongs to the potassium channel HCN family. In terms of assembly, homotetramer. The potassium channel is composed of a homo- or heterotetrameric complex of pore-forming subunits. Interacts with HCN1. Interacts with KCTD3; this interaction increases cell surface expression and current density of this channel. Interacts with PEX5L. Detected in hypothalamus, amygdala, olfactory bulb, hippocampus and retina (at protein level). Highly expressed in brain and heart, in particular in ventricle, atrium and in sinoatrial node (SAN). Detected at low levels in skeletal muscle and lung. Expressed in DRG neurons.

Its subcellular location is the cell membrane. The catalysed reaction is K(+)(in) = K(+)(out). It carries out the reaction Na(+)(in) = Na(+)(out). With respect to regulation, unlike HCN2 and HCN4, HCN3 is insensitive to cyclic nucleotides, such as cAMP or cGMP. This lack of sensitivity of HCN3, despite harboring a functional cyclic nucleotide-binding domain (CNBD), may be explained by its shorter C-terminal sequence, which may alter the normal autoinhibition of the channel. Inhibited by Cs(1+) and ivabradine. Phosphatidylinositol-4,5-bisphosphate (PIP(2)) shifts HCN3 activation to more depolarized potentials and accelerated activation kinetics. Hyperpolarization-activated ion channel that are permeable to sodium and potassium ions, with an about 3:1 preference for potassium ions. Contributes to the native pacemaker currents in heart (If) and in neurons (Ih). In particular, plays a pivotal role in maintaining excitability and promoting rhythmic burst firing within hypothalamic nuclei. Exerts a significant influence on the configuration of the cardiac action potential waveform. Does not appear to play a prominent role in the processing of acute, neuropathic, or inflammatory pain. This chain is Potassium/sodium hyperpolarization-activated cyclic nucleotide-gated channel 3 (Hcn3), found in Mus musculus (Mouse).